A 71-amino-acid polypeptide reads, in one-letter code: uncharacterized protein (71 aa).

Residues 1-71 form a disordered region; the sequence is MLFETLKSLS…AFFSRPFYSE (71 aa). The span at 7–33 shows a compositional bias: polar residues; the sequence is KSLSQQNGGQFSDEQSFESPISSSFNG. A compositionally biased stretch (low complexity) spans 35–65; it reads SMPFGSPSSTMSSSYKGNTNSSTKSSSAFFS.

This is an uncharacterized protein from Dictyostelium discoideum (Social amoeba).